We begin with the raw amino-acid sequence, 211 residues long: SsrA-binding protein (211 aa).

Residues 168 to 211 (KHRLRRPRAQRNTQRSVTPRRTRENKNVRGSKARSARRNVRREN) are disordered. Polar residues predominate over residues 177–186 (QRNTQRSVTP). The span at 196 to 211 (RGSKARSARRNVRREN) shows a compositional bias: basic residues.

Belongs to the SmpB family.

The protein localises to the cytoplasm. In terms of biological role, required for rescue of stalled ribosomes mediated by trans-translation. Binds to transfer-messenger RNA (tmRNA), required for stable association of tmRNA with ribosomes. tmRNA and SmpB together mimic tRNA shape, replacing the anticodon stem-loop with SmpB. tmRNA is encoded by the ssrA gene; the 2 termini fold to resemble tRNA(Ala) and it encodes a 'tag peptide', a short internal open reading frame. During trans-translation Ala-aminoacylated tmRNA acts like a tRNA, entering the A-site of stalled ribosomes, displacing the stalled mRNA. The ribosome then switches to translate the ORF on the tmRNA; the nascent peptide is terminated with the 'tag peptide' encoded by the tmRNA and targeted for degradation. The ribosome is freed to recommence translation, which seems to be the essential function of trans-translation. The protein is SsrA-binding protein of Tropheryma whipplei (strain Twist) (Whipple's bacillus).